The following is a 201-amino-acid chain: Adenylyl-sulfate kinase (201 aa).

An ATP-binding site is contributed by 35-42 (GLSGSGKS). The Phosphoserine intermediate role is filled by Ser-109.

This sequence belongs to the APS kinase family.

It carries out the reaction adenosine 5'-phosphosulfate + ATP = 3'-phosphoadenylyl sulfate + ADP + H(+). It functions in the pathway sulfur metabolism; hydrogen sulfide biosynthesis; sulfite from sulfate: step 2/3. Catalyzes the synthesis of activated sulfate. This is Adenylyl-sulfate kinase from Salmonella paratyphi A (strain AKU_12601).